The primary structure comprises 763 residues: Phosphoglycerol transferase I (763 aa).

The next 4 membrane-spanning stretches (helical) occupy residues 1-21 (MSELLSVALFLASVLIYAWKA), 26-46 (WWFAATLTVLGLFVILNITLY), 77-97 (ILPGIGIALALVAVFGALGWI), and 108-128 (VGYSLLALLLALGSVDASPAF).

The protein belongs to the OpgB family.

The protein resides in the cell inner membrane. It carries out the reaction a phosphatidylglycerol + a membrane-derived-oligosaccharide D-glucose = a 1,2-diacyl-sn-glycerol + a membrane-derived-oligosaccharide 6-(glycerophospho)-D-glucose.. It participates in glycan metabolism; osmoregulated periplasmic glucan (OPG) biosynthesis. Transfers a phosphoglycerol residue from phosphatidylglycerol to the membrane-bound nascent glucan backbones. The chain is Phosphoglycerol transferase I from Salmonella paratyphi B (strain ATCC BAA-1250 / SPB7).